The following is a 161-amino-acid chain: Calmodulin-like protein (161 aa).

4 consecutive EF-hand domains span residues 21 to 56 (EEID…LGQN), 57 to 92 (PTEQ…MMKE), 93 to 128 (TDSE…MGMQ), and 129 to 161 (FSEE…MSNQ). Positions 34, 36, 38, 40, 45, 70, 72, 74, 76, 81, 106, 108, 110, 117, 142, 144, 146, 148, and 153 each coordinate Ca(2+).

Belongs to the calmodulin family.

In terms of biological role, this protein resembles calmodulin in sequence but possibly resembles troponin C in function. The polypeptide is Calmodulin-like protein (cal-1) (Caenorhabditis elegans).